The primary structure comprises 206 residues: Recombination protein RecR (206 aa).

Residues 58–73 form a C4-type zinc finger; it reads CNICGYITEKNICNFC. In terms of domain architecture, Toprim spans 81–178; sequence STIMIVADNR…KITKLAYGIP (98 aa).

This sequence belongs to the RecR family.

In terms of biological role, may play a role in DNA repair. It seems to be involved in an RecBC-independent recombinational process of DNA repair. It may act with RecF and RecO. The polypeptide is Recombination protein RecR (Phytoplasma mali (strain AT)).